The sequence spans 304 residues: Lipoyl synthase (304 aa).

Positions 41, 46, 52, 68, 72, 75, and 281 each coordinate [4Fe-4S] cluster. The Radical SAM core domain occupies 54-270 (GARRTATFMI…RKIAMEKGFK (217 aa)). The disordered stretch occupies residues 282 to 304 (YHADEQVNEAAKEKQRQGEEQLN).

It belongs to the radical SAM superfamily. Lipoyl synthase family. The cofactor is [4Fe-4S] cluster.

It is found in the cytoplasm. The enzyme catalyses [[Fe-S] cluster scaffold protein carrying a second [4Fe-4S](2+) cluster] + N(6)-octanoyl-L-lysyl-[protein] + 2 oxidized [2Fe-2S]-[ferredoxin] + 2 S-adenosyl-L-methionine + 4 H(+) = [[Fe-S] cluster scaffold protein] + N(6)-[(R)-dihydrolipoyl]-L-lysyl-[protein] + 4 Fe(3+) + 2 hydrogen sulfide + 2 5'-deoxyadenosine + 2 L-methionine + 2 reduced [2Fe-2S]-[ferredoxin]. The protein operates within protein modification; protein lipoylation via endogenous pathway; protein N(6)-(lipoyl)lysine from octanoyl-[acyl-carrier-protein]. Catalyzes the radical-mediated insertion of two sulfur atoms into the C-6 and C-8 positions of the octanoyl moiety bound to the lipoyl domains of lipoate-dependent enzymes, thereby converting the octanoylated domains into lipoylated derivatives. This is Lipoyl synthase from Staphylococcus epidermidis (strain ATCC 35984 / DSM 28319 / BCRC 17069 / CCUG 31568 / BM 3577 / RP62A).